The sequence spans 156 residues: Small ribosomal subunit protein uS7 (156 aa).

It belongs to the universal ribosomal protein uS7 family. As to quaternary structure, part of the 30S ribosomal subunit. Contacts proteins S9 and S11.

In terms of biological role, one of the primary rRNA binding proteins, it binds directly to 16S rRNA where it nucleates assembly of the head domain of the 30S subunit. Is located at the subunit interface close to the decoding center, probably blocks exit of the E-site tRNA. In Brachyspira hyodysenteriae (strain ATCC 49526 / WA1), this protein is Small ribosomal subunit protein uS7.